Consider the following 358-residue polypeptide: UDP-N-acetylglucosamine--N-acetylmuramyl-(pentapeptide) pyrophosphoryl-undecaprenol N-acetylglucosamine transferase (358 aa).

Residues 11–13 (TGG), Arg163, Ser191, Ile245, and Gln290 contribute to the UDP-N-acetyl-alpha-D-glucosamine site.

The protein belongs to the glycosyltransferase 28 family. MurG subfamily.

Its subcellular location is the cell inner membrane. The catalysed reaction is di-trans,octa-cis-undecaprenyl diphospho-N-acetyl-alpha-D-muramoyl-L-alanyl-D-glutamyl-meso-2,6-diaminopimeloyl-D-alanyl-D-alanine + UDP-N-acetyl-alpha-D-glucosamine = di-trans,octa-cis-undecaprenyl diphospho-[N-acetyl-alpha-D-glucosaminyl-(1-&gt;4)]-N-acetyl-alpha-D-muramoyl-L-alanyl-D-glutamyl-meso-2,6-diaminopimeloyl-D-alanyl-D-alanine + UDP + H(+). It functions in the pathway cell wall biogenesis; peptidoglycan biosynthesis. Functionally, cell wall formation. Catalyzes the transfer of a GlcNAc subunit on undecaprenyl-pyrophosphoryl-MurNAc-pentapeptide (lipid intermediate I) to form undecaprenyl-pyrophosphoryl-MurNAc-(pentapeptide)GlcNAc (lipid intermediate II). This Herminiimonas arsenicoxydans protein is UDP-N-acetylglucosamine--N-acetylmuramyl-(pentapeptide) pyrophosphoryl-undecaprenol N-acetylglucosamine transferase.